Here is a 2372-residue protein sequence, read N- to C-terminus: NBAS subunit of NRZ tethering complex (2372 aa).

2 WD repeats span residues Asp119–Ile158 and Gly304–Ser343. Positions Leu447–Ala468 are disordered. Residues Glu454 to Glu467 show a composition bias toward acidic residues. Positions Tyr629 to Glu668 form a coiled coil.

Its subcellular location is the endoplasmic reticulum. Involved in Golgi-to-endoplasmic reticulum (ER) retrograde transport; the function is proposed to depend on its association in the NRZ complex which is believed to play a role in SNARE assembly at the ER. Required for normal embryonic development. May play a role in the nonsense-mediated decay pathway of mRNAs containing premature stop codons. This is NBAS subunit of NRZ tethering complex from Danio rerio (Zebrafish).